The sequence spans 270 residues: Phthiotriol/phenolphthiotriol dimycocerosates methyltransferase (270 aa).

Belongs to the methyltransferase superfamily. Phthiotriol/phenolphthiotriol dimycocerosates methyltransferase family.

Catalyzes the methylation of the lipid moiety of the intermediate compounds phthiotriol and glycosylated phenolphthiotriol dimycoserosates to form phthiocerol dimycocerosates (DIM A) and glycosylated phenolphthiocerol dimycocerosates (PGL). This Mycobacterium leprae (strain TN) protein is Phthiotriol/phenolphthiotriol dimycocerosates methyltransferase.